A 296-amino-acid chain; its full sequence is Cell division protein DivIB (296 aa).

Topologically, residues 1–29 (MTKEIPKINNEYLKEKRKKQRIQQRRVQR) are cytoplasmic. A helical membrane pass occupies residues 30-50 (MIVGILVVIVLLILVYMFTPI). The POTRA domain occupies 51–119 (SHIKSADIKG…NPIEVNVKEH (69 aa)). Over 51-296 (SHIKSADIKG…NKIKDEESSE (246 aa)) the chain is Extracellular. Residues 256 to 273 (NNGQTSSASAKEVQSGTA) are compositionally biased toward polar residues. Residues 256 to 296 (NNGQTSSASAKEVQSGTASEDKAKDDLQKALNKIKDEESSE) form a disordered region. The span at 274–296 (SEDKAKDDLQKALNKIKDEESSE) shows a compositional bias: basic and acidic residues.

This sequence belongs to the FtsQ/DivIB family. DivIB subfamily.

The protein resides in the cell membrane. Cell division protein that may be involved in stabilizing or promoting the assembly of the division complex. The protein is Cell division protein DivIB of Staphylococcus pseudintermedius (strain HKU10-03).